The following is a 404-amino-acid chain: Diphosphomevalonate decarboxylase mvd1 (404 aa).

Residues 25–28 (YWGK), R82, 161–166 (SGSACR), and T217 contribute to the (R)-5-diphosphomevalonate site.

This sequence belongs to the diphosphomevalonate decarboxylase family. As to quaternary structure, homodimer.

The catalysed reaction is (R)-5-diphosphomevalonate + ATP = isopentenyl diphosphate + ADP + phosphate + CO2. Its pathway is isoprenoid biosynthesis; isopentenyl diphosphate biosynthesis via mevalonate pathway; isopentenyl diphosphate from (R)-mevalonate: step 3/3. Its function is as follows. Diphosphomevalonate decarboxylase; part of the second module of ergosterol biosynthesis pathway that includes the middle steps of the pathway. Mvd1 converts diphosphomevalonate into isopentenyl diphosphate. The second module is carried out in the vacuole and involves the formation of farnesyl diphosphate, which is also an important intermediate in the biosynthesis of ubiquinone, dolichol, heme and prenylated proteins. Activity by the mevalonate kinase erg12 (AFUA_4G07780) first converts mevalonate into 5-phosphomevalonate. 5-phosphomevalonate is then further converted to 5-diphosphomevalonate by the phosphomevalonate kinase erg8 (AFUA_5G10680). The diphosphomevalonate decarboxylase mvd1 (AFUA_4G07130) then produces isopentenyl diphosphate. The isopentenyl-diphosphate delta-isomerase idi1 (AFUA_6G11160) then catalyzes the 1,3-allylic rearrangement of the homoallylic substrate isopentenyl (IPP) to its highly electrophilic allylic isomer, dimethylallyl diphosphate (DMAPP). Finally the farnesyl diphosphate synthase erg20 (AFUA_5G02450) catalyzes the sequential condensation of isopentenyl pyrophosphate with dimethylallyl pyrophosphate, and then with the resultant geranylpyrophosphate to the ultimate product farnesyl pyrophosphate. In Aspergillus fumigatus (strain ATCC MYA-4609 / CBS 101355 / FGSC A1100 / Af293) (Neosartorya fumigata), this protein is Diphosphomevalonate decarboxylase mvd1.